Here is a 369-residue protein sequence, read N- to C-terminus: MTSILGSARPLIQVGPKSRNASTSMSRLPSFPTTRPCRRAPCSSSSYATISPTAPRSSQRNPTNASRHPRIDEVDHIPTSALGRVLLTAGSALGLLNNPSRGDLLSMLTQVSSGPSLAHLLESMRSTESGRRLLIERPSVNSETVDVDYLASLERGKFGREWIEWLKDNGVGPDGRAEADYMTTLEHKYLIQRYRESHDFYHLLLRMPVTQLGETVVKYFELAQMNMPVAGFAAAGGTLRILASSLSALPKPSQLISAALNRSPAPETAHQPPSSADLSALQTLIPWAMQVGSSSVPLISIEWERCWERDIEEMRREFRITSPPIQVAKFSGRAKKGGKRRGWPSKILEHQKAQHQQQQQQQKVDESRN.

The transit peptide at 1–28 (MTSILGSARPLIQVGPKSRNASTSMSRL) directs the protein to the mitochondrion. Residues 1-70 (MTSILGSARP…NPTNASRHPR (70 aa)) form a disordered region. 2 stretches are compositionally biased toward polar residues: residues 19–33 (RNAS…SFPT) and 47–66 (YATI…TNAS). Zn(2+)-binding residues include histidine 198, aspartate 199, histidine 202, and glutamate 214. Positions 330 to 369 (FSGRAKKGGKRRGWPSKILEHQKAQHQQQQQQQKVDESRN) are disordered. Basic residues predominate over residues 332–343 (GRAKKGGKRRGW).

Belongs to the COQ4 family. In terms of assembly, component of a multi-subunit COQ enzyme complex, composed of at least COQ3, COQ4, COQ5, COQ6, COQ7 and COQ9. The cofactor is Zn(2+).

The protein resides in the mitochondrion inner membrane. The enzyme catalyses a 4-hydroxy-3-methoxy-5-(all-trans-polyprenyl)benzoate + H(+) = a 2-methoxy-6-(all-trans-polyprenyl)phenol + CO2. Its pathway is cofactor biosynthesis; ubiquinone biosynthesis. In terms of biological role, lyase that catalyzes the C1-decarboxylation of 4-hydroxy-3-methoxy-5-(all-trans-polyprenyl)benzoic acid into 2-methoxy-6-(all-trans-polyprenyl)phenol during ubiquinone biosynthesis. The protein is Ubiquinone biosynthesis protein COQ4, mitochondrial of Mycosarcoma maydis (Corn smut fungus).